We begin with the raw amino-acid sequence, 266 residues long: MLIVLSPAKALDFAQPPVQAPLTAPQMTEDTSELAKVARKLTARDLSRLMSLSESLAKLNRERFQAFDPVSEEGLQAAFAFNGDVYQGLRARELDRKALAWAQDHVRILSGLYGVLRPLDAIQPYRLEMGVRLKTKRGSTLYDFWGEKVSLALNEAAQGHKDRTLVNCASGEYFGAVDRRALKLPVVSCRFLEEKDGQARIISFYAKRARGLLARYAIDNRIERAADLKGFDAAGYRFAPELSTDEEFTFARPQPPPPAASRNKED.

The tract at residues 245–266 (DEEFTFARPQPPPPAASRNKED) is disordered.

Belongs to the UPF0246 family.

The chain is UPF0246 protein PHZ_c0561 from Phenylobacterium zucineum (strain HLK1).